Reading from the N-terminus, the 339-residue chain is Outer membrane protein assembly factor BamC (339 aa).

The first 19 residues, 1–19 (MKFSRQLVLGSLAVLVLSA), serve as a signal peptide directing secretion. C20 is lipidated: N-palmitoyl cysteine. Residue C20 is the site of S-diacylglycerol cysteine attachment.

This sequence belongs to the BamC family. In terms of assembly, part of the Bam complex.

Its subcellular location is the cell outer membrane. Its function is as follows. Part of the outer membrane protein assembly complex, which is involved in assembly and insertion of beta-barrel proteins into the outer membrane. The chain is Outer membrane protein assembly factor BamC from Vibrio cholerae serotype O1 (strain ATCC 39315 / El Tor Inaba N16961).